Consider the following 825-residue polypeptide: Breast cancer anti-estrogen resistance protein 3 (825 aa).

Ala-2 carries the N-acetylalanine modification. Phosphoserine occurs at positions 32, 78, and 83. The segment at 40–106 is disordered; sequence DAYQDVSIHG…DRHGETFTFR (67 aa). Positions 79-94 are enriched in polar residues; that stretch reads PRQNSPVTQDGIQESP. Over residues 95 to 106 the composition is skewed to basic and acidic residues; the sequence is WQDRHGETFTFR. An SH2 domain is found at 154–253; sequence WYHGRIPRQV…QSGAIIFQPI (100 aa). Phosphoserine occurs at positions 182 and 290. Residue Lys-334 is modified to N6-methyllysine. A phosphoserine mark is found at Ser-358, Ser-363, and Ser-375. Arg-442 bears the Omega-N-methylarginine mark. Position 471 is a phosphoserine (Ser-471). The region spanning 548-818 is the Ras-GEF domain; sequence DPKVIAQHVL…TALSRKLEPP (271 aa). A mediates the interaction with BCAR1/p130CAS region spans residues 744–748; that stretch reads LATAR.

In terms of assembly, part of a complex comprised of PTPRA, BCAR1, BCAR3 (via SH2 domain) and SRC; the formation of the complex is dependent on integrin mediated-tyrosine phosphorylation of PTPRA. Within the complex, interacts (via SH2 domain) with PTPRA (when phosphorylated on 'Tyr-798'). Interacts (via Ras-GEF domain) with BCAR1. Interacts (via Ras-GEF domain) with NEDD9. Interacts with PTK2/FAK1. Interacts with PTPN1. Interacts (via SH2 domain) with EGFR (when tyrosine-phosphorylated). In terms of processing, phosphorylated on tyrosine residues. As to expression, ubiquitously expressed. Found in several cancer cell lines, but not in nonmalignant breast tissue.

The protein resides in the cytoplasm. It is found in the cell junction. It localises to the focal adhesion. Acts as an adapter protein downstream of several growth factor receptors to promote cell proliferation, migration, and redistribution of actin fibers. Specifically involved in INS/insulin signaling pathway by mediating MAPK1/ERK2-MAPK3/ERK1 activation and DNA synthesis. Promotes insulin-mediated membrane ruffling. In response to vasoconstrictor peptide EDN1, involved in the activation of RAP1 downstream of PTK2B via interaction with phosphorylated BCAR1. Inhibits cell migration and invasion via regulation of TGFB-mediated matrix digestion, actin filament rearrangement, and inhibition of invadopodia activity. May inhibit TGFB-SMAD signaling, via facilitating BCAR1 and SMAD2 and/or SMAD3 interaction. Regulates EGF-induced DNA synthesis. Required for the maintenance of ocular lens morphology and structural integrity, potentially via regulation of focal adhesion complex signaling. Acts upstream of PTPRA to regulate the localization of BCAR1 and PTPRA to focal adhesions, via regulation of SRC-mediated phosphorylation of PTPRA. Positively regulates integrin-induced tyrosine phosphorylation of BCAR1. Acts as a guanine nucleotide exchange factor (GEF) for small GTPases RALA, RAP1A and RRAS. However, in a contrasting study, lacks GEF activity towards RAP1. In Homo sapiens (Human), this protein is Breast cancer anti-estrogen resistance protein 3 (BCAR3).